We begin with the raw amino-acid sequence, 308 residues long: Acetyl-coenzyme A carboxylase carboxyl transferase subunit alpha (308 aa).

Residues 36 to 286 (ELEKEVSSVY…ESYFLKAFEE (251 aa)) form the CoA carboxyltransferase C-terminal domain.

This sequence belongs to the AccA family. In terms of assembly, acetyl-CoA carboxylase is a heterohexamer composed of biotin carboxyl carrier protein (AccB), biotin carboxylase (AccC) and two subunits each of ACCase subunit alpha (AccA) and ACCase subunit beta (AccD).

The protein localises to the cytoplasm. The enzyme catalyses N(6)-carboxybiotinyl-L-lysyl-[protein] + acetyl-CoA = N(6)-biotinyl-L-lysyl-[protein] + malonyl-CoA. The protein operates within lipid metabolism; malonyl-CoA biosynthesis; malonyl-CoA from acetyl-CoA: step 1/1. Its function is as follows. Component of the acetyl coenzyme A carboxylase (ACC) complex. First, biotin carboxylase catalyzes the carboxylation of biotin on its carrier protein (BCCP) and then the CO(2) group is transferred by the carboxyltransferase to acetyl-CoA to form malonyl-CoA. The protein is Acetyl-coenzyme A carboxylase carboxyl transferase subunit alpha of Helicobacter hepaticus (strain ATCC 51449 / 3B1).